The following is a 197-amino-acid chain: Peptide deformylase (197 aa).

Positions 106 and 148 each coordinate Fe cation. Glu-149 is an active-site residue. Residue His-152 participates in Fe cation binding.

This sequence belongs to the polypeptide deformylase family. Fe(2+) serves as cofactor.

It catalyses the reaction N-terminal N-formyl-L-methionyl-[peptide] + H2O = N-terminal L-methionyl-[peptide] + formate. In terms of biological role, removes the formyl group from the N-terminal Met of newly synthesized proteins. Requires at least a dipeptide for an efficient rate of reaction. N-terminal L-methionine is a prerequisite for activity but the enzyme has broad specificity at other positions. This is Peptide deformylase from Mycolicibacterium paratuberculosis (strain ATCC BAA-968 / K-10) (Mycobacterium paratuberculosis).